We begin with the raw amino-acid sequence, 501 residues long: GTPase Obg (501 aa).

The Obg domain occupies 2–159; the sequence is NRFIDRVVLH…HDLILELKSM (158 aa). An OBG-type G domain is found at 160–341; that stretch reads ADVGLVGFPS…LKYKLLEIVQ (182 aa). Residues 166–173, 191–195, 212–215, 292–295, and 322–324 each bind GTP; these read GFPSAGKS, FTTLQ, DVPG, NKAD, and SAV. Mg(2+)-binding residues include S173 and T193. The 81-residue stretch at 362-442 folds into the OCT domain; that stretch reads VDHRTKGQFQ…IGGISFEWEP (81 aa).

It belongs to the TRAFAC class OBG-HflX-like GTPase superfamily. OBG GTPase family. In terms of assembly, monomer. The cofactor is Mg(2+).

It localises to the cytoplasm. In terms of biological role, an essential GTPase which binds GTP, GDP and possibly (p)ppGpp with moderate affinity, with high nucleotide exchange rates and a fairly low GTP hydrolysis rate. Plays a role in control of the cell cycle, stress response, ribosome biogenesis and in those bacteria that undergo differentiation, in morphogenesis control. The polypeptide is GTPase Obg (Corynebacterium glutamicum (strain R)).